Here is a 305-residue protein sequence, read N- to C-terminus: Ornithine carbamoyltransferase, catabolic (305 aa).

Carbamoyl phosphate is bound by residues 50-53, glutamine 77, arginine 101, and 128-131; these read STRT and HPLQ. L-ornithine contacts are provided by residues asparagine 159, aspartate 223, and 227 to 228; that span reads SM. Carbamoyl phosphate is bound by residues 263–264 and arginine 291; that span reads CL.

Belongs to the aspartate/ornithine carbamoyltransferase superfamily. OTCase family.

The protein resides in the cytoplasm. It carries out the reaction carbamoyl phosphate + L-ornithine = L-citrulline + phosphate + H(+). It functions in the pathway amino-acid degradation; L-arginine degradation via ADI pathway; carbamoyl phosphate from L-arginine: step 2/2. Its function is as follows. Reversibly catalyzes the transfer of the carbamoyl group from carbamoyl phosphate (CP) to the N(epsilon) atom of ornithine (ORN) to produce L-citrulline. This Thermoplasma volcanium (strain ATCC 51530 / DSM 4299 / JCM 9571 / NBRC 15438 / GSS1) protein is Ornithine carbamoyltransferase, catabolic.